A 311-amino-acid chain; its full sequence is Systemic RNA interference defective protein 2 (311 aa).

The first 20 residues, 1 to 20, serve as a signal peptide directing secretion; it reads MPRFVYFCFALIALLPISWT. The Extracellular segment spans residues 21–188; it reads MDGILITDVE…EETKTVVNKN (168 aa). A helical transmembrane segment spans residues 189-209; it reads GGAVAVAVIEGIALIAILAFL. Over 210 to 311 the chain is Cytoplasmic; it reads GYRTMVNHKL…NDPFATLESW (102 aa). Polar residues predominate over residues 287–301; sequence NSSAAQPSTTSNGQF. Residues 287–311 are disordered; sequence NSSAAQPSTTSNGQFNDPFATLESW.

Expressed in the intestinal lumen. Also present, at lower levels, in the excretory duct cells.

It is found in the apical cell membrane. Its subcellular location is the cytoplasm. Functionally, plays a role in RNA-mediated gene silencing by mediating endocytic uptake of double-stranded RNA (dsRNA) ingested from the environment into intestinal cells from the intestinal lumen. Selective for dsRNAs of at least 50 bp. Required for avoidance behavior induced by small RNAs derived from pathogenic bacteria such as P.aeruginosa. This Caenorhabditis elegans protein is Systemic RNA interference defective protein 2.